The chain runs to 63 residues: MKAQELRTKNVEELKAELINLLGEQFKLRMQAATGQLQQTHQLKQVRRSIAQVKTVLNQKAGE.

It belongs to the universal ribosomal protein uL29 family.

The chain is Large ribosomal subunit protein uL29 from Haemophilus ducreyi (strain 35000HP / ATCC 700724).